The primary structure comprises 107 residues: U1-lycotoxin-Ls1g (107 aa).

An N-terminal signal peptide occupies residues 1–20 (MMKVLVVVALLVTLISYSSS). A propeptide spanning residues 21–41 (EGIDDLEADELLSLMANEQTR) is cleaved from the precursor. Cystine bridges form between Cys51/Cys68, Cys58/Cys86, and Cys70/Cys84.

It belongs to the neurotoxin 19 (CSTX) family. 04 (U1-Lctx) subfamily. In terms of tissue distribution, expressed by the venom gland.

It is found in the secreted. The sequence is that of U1-lycotoxin-Ls1g from Lycosa singoriensis (Wolf spider).